The primary structure comprises 562 residues: Glutamine--tRNA ligase (562 aa).

A 'HIGH' region motif is present at residues 35–45; that stretch reads PEPNGYLHIGH. Residues 36-38 and 42-48 each bind ATP; these read EPN and HIGHAKS. Residues Asp-68 and Tyr-213 each contribute to the L-glutamine site. ATP is bound by residues Thr-232 and 264-265; that span reads RL. Residues 271-275 carry the 'KMSKS' region motif; sequence ITSKR.

Belongs to the class-I aminoacyl-tRNA synthetase family. As to quaternary structure, monomer.

The protein localises to the cytoplasm. It catalyses the reaction tRNA(Gln) + L-glutamine + ATP = L-glutaminyl-tRNA(Gln) + AMP + diphosphate. The chain is Glutamine--tRNA ligase from Neisseria meningitidis serogroup A / serotype 4A (strain DSM 15465 / Z2491).